We begin with the raw amino-acid sequence, 179 residues long: Large ribosomal subunit protein uL5 (179 aa).

The protein belongs to the universal ribosomal protein uL5 family. In terms of assembly, part of the 50S ribosomal subunit; part of the 5S rRNA/L5/L18/L25 subcomplex. Contacts the 5S rRNA and the P site tRNA. Forms a bridge to the 30S subunit in the 70S ribosome.

Functionally, this is one of the proteins that bind and probably mediate the attachment of the 5S RNA into the large ribosomal subunit, where it forms part of the central protuberance. In the 70S ribosome it contacts protein S13 of the 30S subunit (bridge B1b), connecting the 2 subunits; this bridge is implicated in subunit movement. Contacts the P site tRNA; the 5S rRNA and some of its associated proteins might help stabilize positioning of ribosome-bound tRNAs. In Dechloromonas aromatica (strain RCB), this protein is Large ribosomal subunit protein uL5.